The sequence spans 636 residues: uncharacterized protein (636 aa).

Disordered stretches follow at residues 1-22 and 81-107; these read MYNVRGDLNRKTPSDGNVNEIG and SSQTYNRYPNGGNSAGSDMYSTSPQNN. The Cytoplasmic segment spans residues 1 to 170; it reads MYNVRGDLNR…YFVGGEGLMQ (170 aa). Residues 171–191 form a helical; Signal-anchor for type II membrane protein membrane-spanning segment; the sequence is LLFLLFLAAGTGMLFIGLPIL. Residues 192–636 are Lumenal-facing; that stretch reads TYTGHNSLAS…RPKNSLMDGC (445 aa). The GH16 domain occupies 218-587; sequence LRYGSLIDPD…YVRIYQDSSD (370 aa). Residues Asn291, Asn378, Asn429, Asn464, Asn489, and Asn616 are each glycosylated (N-linked (GlcNAc...) asparagine).

Belongs to the SKN1/KRE6 family.

The protein localises to the endoplasmic reticulum membrane. Required for synthesis of the major beta-glucans of the yeast cell wall. This is an uncharacterized protein from Schizosaccharomyces pombe (strain 972 / ATCC 24843) (Fission yeast).